A 433-amino-acid chain; its full sequence is Adenylyltransferase and sulfurtransferase UBA4 (433 aa).

ATP contacts are provided by residues Gly-70, Asp-91, 98-102, Lys-115, and 159-160; these read SNLHR and DT. Zn(2+) contacts are provided by Cys-201 and Cys-204. The active-site Glycyl thioester intermediate; for adenylyltransferase activity is the Cys-218. Positions 279 and 282 each coordinate Zn(2+). In terms of domain architecture, Rhodanese spans 332-431; the sequence is SGNNKVLLDV…YIDDVDQSIP (100 aa). Cys-390 serves as the catalytic Cysteine persulfide intermediate; for sulfurtransferase activity.

This sequence in the N-terminal section; belongs to the HesA/MoeB/ThiF family. UBA4 subfamily. Zn(2+) is required as a cofactor.

It is found in the cytoplasm. Its subcellular location is the cytosol. Its pathway is tRNA modification; 5-methoxycarbonylmethyl-2-thiouridine-tRNA biosynthesis. Functionally, plays a central role in 2-thiolation of mcm(5)S(2)U at tRNA wobble positions of cytosolic tRNA(Lys), tRNA(Glu) and tRNA(Gln). Acts by mediating the C-terminal thiocarboxylation of sulfur carrier URM1. Its N-terminus first activates URM1 as acyl-adenylate (-COAMP), then the persulfide sulfur on the catalytic cysteine is transferred to URM1 to form thiocarboxylation (-COSH) of its C-terminus. The reaction probably involves hydrogen sulfide that is generated from the persulfide intermediate and that acts as a nucleophile towards URM1. Subsequently, a transient disulfide bond is formed. Does not use thiosulfate as sulfur donor; NFS1 probably acting as a sulfur donor for thiocarboxylation reactions. Prior mcm(5) tRNA modification by the elongator complex is required for 2-thiolation. May also be involved in protein urmylation. The protein is Adenylyltransferase and sulfurtransferase UBA4 of Candida glabrata (strain ATCC 2001 / BCRC 20586 / JCM 3761 / NBRC 0622 / NRRL Y-65 / CBS 138) (Yeast).